We begin with the raw amino-acid sequence, 256 residues long: Type III pantothenate kinase (256 aa).

Position 6–13 (6–13 (DIGNTNIV)) interacts with ATP. Substrate is bound at residue 107 to 110 (GADI). Aspartate 109 serves as the catalytic Proton acceptor. Position 129 (aspartate 129) interacts with K(+). Residue threonine 132 coordinates ATP. Threonine 184 contributes to the substrate binding site.

It belongs to the type III pantothenate kinase family. Homodimer. It depends on NH4(+) as a cofactor. The cofactor is K(+).

It localises to the cytoplasm. It carries out the reaction (R)-pantothenate + ATP = (R)-4'-phosphopantothenate + ADP + H(+). The protein operates within cofactor biosynthesis; coenzyme A biosynthesis; CoA from (R)-pantothenate: step 1/5. In terms of biological role, catalyzes the phosphorylation of pantothenate (Pan), the first step in CoA biosynthesis. This is Type III pantothenate kinase from Bifidobacterium longum (strain DJO10A).